A 155-amino-acid chain; its full sequence is MRLRLIAVGSRMPRWVEEGWQEYVKRLPAELSLELVEIPLNTRGKNADVARLIRQEGEAMLARVQPGERVVTLEVEGRLWSTEQLARELDRWRLDARTVNLMVGGPEGLAPEVCARSEQRWSLSPLTLPHPLVRILVGEQIYRAWTVLSGHPYHK.

S-adenosyl-L-methionine is bound by residues Leu-73, Gly-104, and 123–128 (LSPLTL).

It belongs to the RNA methyltransferase RlmH family. As to quaternary structure, homodimer.

Its subcellular location is the cytoplasm. The enzyme catalyses pseudouridine(1915) in 23S rRNA + S-adenosyl-L-methionine = N(3)-methylpseudouridine(1915) in 23S rRNA + S-adenosyl-L-homocysteine + H(+). Functionally, specifically methylates the pseudouridine at position 1915 (m3Psi1915) in 23S rRNA. The sequence is that of Ribosomal RNA large subunit methyltransferase H from Pseudomonas aeruginosa (strain UCBPP-PA14).